The primary structure comprises 186 residues: Chromosome-anchoring protein RacA (186 aa).

The segment at residues 3–23 (TADAANELGVSTKTVQRWVKQ) is a DNA-binding region (H-T-H motif). Positions 90–170 (ERLEERLQRF…NRREKDTAVR (81 aa)) form a coiled coil. The tract at residues 158–186 (ESMNRREKDTAVRREEKKPKSKLKSIFSF) is disordered. A compositionally biased stretch (basic and acidic residues) spans 160–175 (MNRREKDTAVRREEKK).

It belongs to the RacA family.

The protein resides in the cytoplasm. Its function is as follows. Required for the formation of axial filaments and for anchoring the origin regions at the cell poles in sporulating cells, thus ensuring proper chromosome segregation in the prespore. Binds in a dispersed manner throughout the chromosome but preferentially to sites clustered in the origin portion of the chromosome, causing condensation of the chromosome and its remodeling into an elongated, anchored structure. The polypeptide is Chromosome-anchoring protein RacA (Bacillus licheniformis (strain ATCC 14580 / DSM 13 / JCM 2505 / CCUG 7422 / NBRC 12200 / NCIMB 9375 / NCTC 10341 / NRRL NRS-1264 / Gibson 46)).